The sequence spans 261 residues: UPF0246 protein Daci_5283 (261 aa).

The protein belongs to the UPF0246 family.

This is UPF0246 protein Daci_5283 from Delftia acidovorans (strain DSM 14801 / SPH-1).